The chain runs to 175 residues: Austinoid biosynthesis cluster protein F (175 aa).

Belongs to the trt14 isomerase family. In terms of assembly, homodimer.

Its pathway is secondary metabolite biosynthesis; terpenoid biosynthesis. Part of the gene cluster that mediates the biosynthesis of calidodehydroaustin, a fungal meroterpenoid. The first step of the pathway is the synthesis of 3,5-dimethylorsellinic acid by the polyketide synthase ausA. 3,5-dimethylorsellinic acid is then prenylated by the polyprenyl transferase ausN. Further epoxidation by the FAD-dependent monooxygenase ausM and cyclization by the probable terpene cyclase ausL lead to the formation of protoaustinoid A. Protoaustinoid A is then oxidized to spiro-lactone preaustinoid A3 by the combined action of the FAD-binding monooxygenases ausB and ausC, and the dioxygenase ausE. Acid-catalyzed keto-rearrangement and ring contraction of the tetraketide portion of preaustinoid A3 by ausJ lead to the formation of preaustinoid A4. The aldo-keto reductase ausK, with the help of ausH, is involved in the next step by transforming preaustinoid A4 into isoaustinone which is in turn hydroxylated by the P450 monooxygenase ausI to form austinolide. The cytochrome P450 monooxygenase ausG modifies austinolide to austinol. Austinol is further acetylated to austin by the O-acetyltransferase ausP, which spontaneously changes to dehydroaustin. The cytochrome P450 monooxygenase ausR then converts dehydroaustin is into 7-dehydrodehydroaustin. The hydroxylation catalyzed by ausR permits the O-acetyltransferase ausQ to add an additional acetyl group to the molecule, leading to the formation of acetoxydehydroaustin. The short chain dehydrogenase ausT catalyzes the reduction of the double bond present between carbon atoms 1 and 2 to convert 7-dehydrodehydroaustin into 1,2-dihydro-7-hydroxydehydroaustin. AusQ catalyzes not only an acetylation reaction but also the addition of the PKS ausV diketide product to 1,2-dihydro-7-hydroxydehydroaustin, forming precalidodehydroaustin. Finally, the iron/alpha-ketoglutarate-dependent dioxygenase converts precalidodehydroaustin into calidodehydroaustin. This Aspergillus calidoustus protein is Austinoid biosynthesis cluster protein F.